The following is a 150-amino-acid chain: Early 4 ORF6/7 control protein (150 aa).

Residues 1 to 31 (MTTSGVPFGMTLRPTRSRLSRRTPYSRDRLP) are disordered. A Nuclear localization signal motif is present at residues 1–58 (MTTSGVPFGMTLRPTRSRLSRRTPYSRDRLPPFETETRATILEDHPLLPECNTLTMHN).

Belongs to the adenoviridae E4-orf6/7 family. As to quaternary structure, interacts with host E2F proteins.

The protein resides in the host nucleus. Its function is as follows. Modulates viral and host transcriptional activity to promote viral genome replication. Stimulates viral E2a promoter activity by binding and inducing dimerization of host E2F. During viral infection E1A protein binds to cellular retinablastoma (RB) family members and dissociates these repressors from a complex with E2F proteins. Free E2F is then bound to E4orf6/7 which leads to transactivation of viral E2 promoter, and cellular promoters such as E2F-1 promoter. Activation of cellular E2F targets promote cell cycle S phase and thereby possibly favorises viral DNA replication process. The sequence is that of Early 4 ORF6/7 control protein from Human adenovirus C serotype 2 (HAdV-2).